The following is a 121-amino-acid chain: Autophagy-related protein 8 (121 aa).

Residue Gly116 is the site of Phosphatidylethanolamine amidated glycine attachment. A propeptide spans 117–121 (DFETA) (removed in mature form).

Belongs to the ATG8 family. The C-terminal 5 residues are removed to expose Gly-116 at the C-terminus. The C-terminal Gly is then amidated with phosphatidylethanolamine by an activating system similar to that for ubiquitin.

It is found in the cytoplasmic vesicle. The protein localises to the autophagosome membrane. The protein resides in the vacuole membrane. Functionally, ubiquitin-like modifier involved in autophagosome formation. With cpr-1/atg4, mediates the delivery of the autophagosomes to the vacuole via the microtubule cytoskeleton. Required for selective autophagic degradation of the nucleus (nucleophagy) as well as for mitophagy which contributes to regulate mitochondrial quantity and quality by eliminating the mitochondria to a basal level to fulfill cellular energy requirements and preventing excess ROS production. Also participates in membrane fusion events that take place in the early secretory pathway. Also involved in endoplasmic reticulum-specific autophagic process and is essential for the survival of cells subjected to severe ER stress. The apg-6/atg8-PE conjugate mediates tethering between adjacent membranes and stimulates membrane hemifusion, leading to expansion of the autophagosomal membrane during autophagy. In Neurospora crassa (strain ATCC 24698 / 74-OR23-1A / CBS 708.71 / DSM 1257 / FGSC 987), this protein is Autophagy-related protein 8 (apg-6).